A 207-amino-acid chain; its full sequence is Acyl-homoserine-lactone synthase (207 aa).

The protein belongs to the autoinducer synthase family.

It carries out the reaction a fatty acyl-[ACP] + S-adenosyl-L-methionine = an N-acyl-L-homoserine lactone + S-methyl-5'-thioadenosine + holo-[ACP] + H(+). Its function is as follows. Required for the synthesis of N-butanoyl-L-homoserine lactone (BHL), an autoinducer molecule which binds to AsaR. This is Acyl-homoserine-lactone synthase (asaI) from Aeromonas salmonicida.